A 339-amino-acid polypeptide reads, in one-letter code: UDP-N-acetylglucosamine--N-acetylmuramyl-(pentapeptide) pyrophosphoryl-undecaprenol N-acetylglucosamine transferase (339 aa).

Residues 10–12, asparagine 124, arginine 168, serine 188, isoleucine 235, and glutamine 280 contribute to the UDP-N-acetyl-alpha-D-glucosamine site; that span reads TGG.

This sequence belongs to the glycosyltransferase 28 family. MurG subfamily.

The protein localises to the cell inner membrane. The enzyme catalyses di-trans,octa-cis-undecaprenyl diphospho-N-acetyl-alpha-D-muramoyl-L-alanyl-D-glutamyl-meso-2,6-diaminopimeloyl-D-alanyl-D-alanine + UDP-N-acetyl-alpha-D-glucosamine = di-trans,octa-cis-undecaprenyl diphospho-[N-acetyl-alpha-D-glucosaminyl-(1-&gt;4)]-N-acetyl-alpha-D-muramoyl-L-alanyl-D-glutamyl-meso-2,6-diaminopimeloyl-D-alanyl-D-alanine + UDP + H(+). Its pathway is cell wall biogenesis; peptidoglycan biosynthesis. In terms of biological role, cell wall formation. Catalyzes the transfer of a GlcNAc subunit on undecaprenyl-pyrophosphoryl-MurNAc-pentapeptide (lipid intermediate I) to form undecaprenyl-pyrophosphoryl-MurNAc-(pentapeptide)GlcNAc (lipid intermediate II). This is UDP-N-acetylglucosamine--N-acetylmuramyl-(pentapeptide) pyrophosphoryl-undecaprenol N-acetylglucosamine transferase from Pseudothermotoga lettingae (strain ATCC BAA-301 / DSM 14385 / NBRC 107922 / TMO) (Thermotoga lettingae).